The chain runs to 425 residues: Lysosome-associated membrane glycoprotein 2 (425 aa).

Positions 1–27 are cleaved as a signal peptide; that stretch reads MAPPRCPAGLALLLLLLGACGFFQSYA. The segment at 28–192 is first lumenal domain; sequence VEVDVKDASN…SKKESRCYAD (165 aa). Over 28 to 389 the chain is Lumenal; that stretch reads VEVDVKDASN…EECFADSDLN (362 aa). 20 N-linked (GlcNAc...) asparagine glycosylation sites follow: asparagine 37, asparagine 56, asparagine 62, asparagine 74, asparagine 100, asparagine 105, asparagine 120, asparagine 163, asparagine 170, asparagine 179, asparagine 206, asparagine 232, asparagine 239, asparagine 252, asparagine 276, asparagine 287, asparagine 298, asparagine 312, asparagine 320, and asparagine 331. An intrachain disulfide couples cysteine 40 to cysteine 78. Cysteine 153 and cysteine 189 are joined by a disulfide. The hinge stretch occupies residues 193–238; that stretch reads TPTAAPTVLPTVANVTTASTTISPAPTTAPKPAENPVTGNYSLKTG. A second lumenal domain region spans residues 239 to 390; sequence NKTCLLATVG…ECFADSDLNF (152 aa). A disulfide bridge links cysteine 242 with cysteine 274. An intrachain disulfide couples cysteine 345 to cysteine 382. Residues 390-414 traverse the membrane as a helical segment; it reads FLIPVAVGMALGFLIILVFISYIIG. The Cytoplasmic segment spans residues 415–425; the sequence is RRKSRTGYQSV. An important for binding and subsequent lysosomal degradation of target proteins region spans residues 416-419; sequence RKSR.

This sequence belongs to the LAMP family. In terms of assembly, monomer. Forms large homooligomers. Post-translationally, extensively N-glycosylated. Contains a minor proportion of O-linked glycans.

It is found in the lysosome membrane. It localises to the endosome membrane. The protein resides in the cell membrane. Its subcellular location is the cytoplasmic vesicle. The protein localises to the autophagosome membrane. Its function is as follows. Lysosomal membrane glycoprotein which plays an important role in lysosome biogenesis, lysosomal pH regulation and autophagy. Plays an important role in chaperone-mediated autophagy, a process that mediates lysosomal degradation of proteins in response to various stresses and as part of the normal turnover of proteins with a long biological half-live. In the chaperone-mediated autophagy, acts downstream of chaperones, such as HSPA8/HSC70, which recognize and bind substrate proteins and mediate their recruitment to lysosomes, where target proteins bind LAMP2. Plays a role in lysosomal protein degradation in response to starvation. Required for the fusion of autophagosomes with lysosomes during autophagy. This Gallus gallus (Chicken) protein is Lysosome-associated membrane glycoprotein 2 (LAMP2).